Consider the following 170-residue polypeptide: ATP synthase subunit b (170 aa).

Residues 22–41 (ILNWAVVVFGLYKFLPGFLG) form a helical membrane-spanning segment. Residues 72–98 (AKKDLSSAEEKASQIKADSLKRSESIR) are disordered.

The protein belongs to the ATPase B chain family. In terms of assembly, F-type ATPases have 2 components, F(1) - the catalytic core - and F(0) - the membrane proton channel. F(1) has five subunits: alpha(3), beta(3), gamma(1), delta(1), epsilon(1). F(0) has four main subunits: a(1), b(1), b'(1) and c(10-14). The alpha and beta chains form an alternating ring which encloses part of the gamma chain. F(1) is attached to F(0) by a central stalk formed by the gamma and epsilon chains, while a peripheral stalk is formed by the delta, b and b' chains.

The protein resides in the cellular thylakoid membrane. Its function is as follows. F(1)F(0) ATP synthase produces ATP from ADP in the presence of a proton or sodium gradient. F-type ATPases consist of two structural domains, F(1) containing the extramembraneous catalytic core and F(0) containing the membrane proton channel, linked together by a central stalk and a peripheral stalk. During catalysis, ATP synthesis in the catalytic domain of F(1) is coupled via a rotary mechanism of the central stalk subunits to proton translocation. In terms of biological role, component of the F(0) channel, it forms part of the peripheral stalk, linking F(1) to F(0). The protein is ATP synthase subunit b of Prochlorococcus marinus (strain MIT 9301).